Reading from the N-terminus, the 98-residue chain is Aspartyl/glutamyl-tRNA(Asn/Gln) amidotransferase subunit C (98 aa).

This sequence belongs to the GatC family. In terms of assembly, heterotrimer of A, B and C subunits.

The enzyme catalyses L-glutamyl-tRNA(Gln) + L-glutamine + ATP + H2O = L-glutaminyl-tRNA(Gln) + L-glutamate + ADP + phosphate + H(+). The catalysed reaction is L-aspartyl-tRNA(Asn) + L-glutamine + ATP + H2O = L-asparaginyl-tRNA(Asn) + L-glutamate + ADP + phosphate + 2 H(+). Allows the formation of correctly charged Asn-tRNA(Asn) or Gln-tRNA(Gln) through the transamidation of misacylated Asp-tRNA(Asn) or Glu-tRNA(Gln) in organisms which lack either or both of asparaginyl-tRNA or glutaminyl-tRNA synthetases. The reaction takes place in the presence of glutamine and ATP through an activated phospho-Asp-tRNA(Asn) or phospho-Glu-tRNA(Gln). The polypeptide is Aspartyl/glutamyl-tRNA(Asn/Gln) amidotransferase subunit C (Bifidobacterium adolescentis (strain ATCC 15703 / DSM 20083 / NCTC 11814 / E194a)).